The following is a 160-amino-acid chain: Large ribosomal subunit protein eL21A (160 aa).

Lys32 participates in a covalent cross-link: Glycyl lysine isopeptide (Lys-Gly) (interchain with G-Cter in ubiquitin).

This sequence belongs to the eukaryotic ribosomal protein eL21 family. In terms of assembly, component of the large ribosomal subunit (LSU). Mature yeast ribosomes consist of a small (40S) and a large (60S) subunit. The 40S small subunit contains 1 molecule of ribosomal RNA (18S rRNA) and 33 different proteins (encoded by 57 genes). The large 60S subunit contains 3 rRNA molecules (25S, 5.8S and 5S rRNA) and 46 different proteins (encoded by 81 genes).

It is found in the cytoplasm. Its function is as follows. Component of the ribosome, a large ribonucleoprotein complex responsible for the synthesis of proteins in the cell. The small ribosomal subunit (SSU) binds messenger RNAs (mRNAs) and translates the encoded message by selecting cognate aminoacyl-transfer RNA (tRNA) molecules. The large subunit (LSU) contains the ribosomal catalytic site termed the peptidyl transferase center (PTC), which catalyzes the formation of peptide bonds, thereby polymerizing the amino acids delivered by tRNAs into a polypeptide chain. The nascent polypeptides leave the ribosome through a tunnel in the LSU and interact with protein factors that function in enzymatic processing, targeting, and the membrane insertion of nascent chains at the exit of the ribosomal tunnel. This Saccharomyces cerevisiae (strain ATCC 204508 / S288c) (Baker's yeast) protein is Large ribosomal subunit protein eL21A.